The sequence spans 969 residues: Leucine--tRNA ligase (969 aa).

Positions 46-56 (PYLNGVLHAGH) match the 'HIGH' region motif. The 'KMSKS' region motif lies at 658–662 (KLSKS). K661 serves as a coordination point for ATP.

It belongs to the class-I aminoacyl-tRNA synthetase family.

The protein localises to the cytoplasm. The enzyme catalyses tRNA(Leu) + L-leucine + ATP = L-leucyl-tRNA(Leu) + AMP + diphosphate. The chain is Leucine--tRNA ligase from Methanococcus aeolicus (strain ATCC BAA-1280 / DSM 17508 / OCM 812 / Nankai-3).